A 342-amino-acid polypeptide reads, in one-letter code: MQNEYSQFEQRKRDHIELALMPANQSNELNPFDHFSLVHEALPDLDFKDISIQSIRFKKPVEKPFIISSMTAGHSNALEINSRLMEACSKTKWAMGVGSQRRELSDKQAAFEWAPLRRDFPMVSLFSNLGIAQLIDTPISAIQRLIDTLQAEALIIHCNPLQECIQPEGTTNFQGCWTALEALVKKIASPVIIKETGCGFSKNTLLRLNNIGVAAVDVSGVGGTHWGRIEGHRANKDPIRHRTADTFRNWGIDTLQSTRNAISLNPSFEVWGSGGVRNGLDAAKLFALGATTVGFAKPMLEAALDSTGQVLTQMNIIEYELKTAMFCTGSRVLDDLKEKACP.

11–12 provides a ligand contact to substrate; the sequence is RK. Residues S68, 69-71, S99, and N128 contribute to the FMN site; that span reads SMT. Position 99–101 (99–101) interacts with substrate; the sequence is SQR. Residue Q162 participates in substrate binding. Mg(2+) is bound at residue E163. FMN-binding positions include K194, S219, T224, 275 to 277, and 296 to 297; these read GVR and AK.

This sequence belongs to the IPP isomerase type 2 family. In terms of assembly, homooctamer. Dimer of tetramers. Requires FMN as cofactor. It depends on NADPH as a cofactor. Mg(2+) serves as cofactor.

The protein localises to the cytoplasm. It catalyses the reaction isopentenyl diphosphate = dimethylallyl diphosphate. Its function is as follows. Involved in the biosynthesis of isoprenoids. Catalyzes the 1,3-allylic rearrangement of the homoallylic substrate isopentenyl (IPP) to its allylic isomer, dimethylallyl diphosphate (DMAPP). This is Isopentenyl-diphosphate delta-isomerase from Legionella pneumophila (strain Paris).